The primary structure comprises 686 residues: MSKIRVHEYAKKHNISSKDLMTKLKEMNIEVSNHMTMLDDEVVNKLDNEYQTEKPSVADEFEVEEKVVRSKKNSNKKKKKGKGNEDKRQENFAGRQQTQIVETPDKITFSGSLTVGDLAKKLSKEPSEIIKKLFMLGIMATINQDLDKDTIELIANDYGIEVEEEVIVSETEFETFIDEQDDEENLKERPAVVTIMGHVDHGKTTLLDSIRNSKVTAGEAGGITQHIGAYQVEVNDKKITFLDTPGHAAFTTMRARGAQVTDITILVVAADDGVMPQTVEAINHAKAAGVPIIVAVNKMDKPAANPDRVMQELTEYELVPEAWGGDTIFVPISAIQGEGIDNLLEMILLVSEVEEYKANPNRYATGTVIEAQLDKGKGTIATLLVQNGTLRVGDPIVVGTSFGRVRAMVSDIGRRVKVAGPSTPVEITGLNEVPQAGDRFMAFADEKKARQIGESRAQEALVAQRGEKSKLSLEDLFQQIQEGDVKEINLIVKADVQGSVEAMAASLRKIDVEGVKVKIIHTGVGAITESDIILASASNAIVIGFNVRPDVNAKRTAELENVDIRLHRIIYKVIEEIEAAMQGMLDPEFEEKVIGQAEVRQTFKVTKVGTIAGCYVTDGKITRDSGVRIIRDGVVIFEGQLDTLKRFKDDVKEVAQNYECGITIERYNDLKEGDIIEAYIMEEVKR.

The tract at residues F61 to T98 is disordered. Over residues R69–G81 the composition is skewed to basic residues. The 170-residue stretch at E188–K357 folds into the tr-type G domain. The segment at G197 to T204 is G1. Position 197–204 (G197–T204) interacts with GTP. Residues G222–H226 are G2. Residues D243–G246 form a G3 region. GTP contacts are provided by residues D243–H247 and N297–D300. The tract at residues N297 to D300 is G4. The tract at residues S333–I335 is G5.

It belongs to the TRAFAC class translation factor GTPase superfamily. Classic translation factor GTPase family. IF-2 subfamily.

It localises to the cytoplasm. In terms of biological role, one of the essential components for the initiation of protein synthesis. Protects formylmethionyl-tRNA from spontaneous hydrolysis and promotes its binding to the 30S ribosomal subunits. Also involved in the hydrolysis of GTP during the formation of the 70S ribosomal complex. The chain is Translation initiation factor IF-2 from Bacillus cereus (strain B4264).